The primary structure comprises 83 residues: Large ribosomal subunit protein bL31B (83 aa).

The protein belongs to the bacterial ribosomal protein bL31 family. Type B subfamily. Part of the 50S ribosomal subunit.

In Lacticaseibacillus casei (strain BL23) (Lactobacillus casei), this protein is Large ribosomal subunit protein bL31B.